Here is a 227-residue protein sequence, read N- to C-terminus: Orotidine 5'-phosphate decarboxylase (227 aa).

Substrate-binding positions include D12, K34, 61-70 (DLKLHDIPNT), T117, R178, Q187, G207, and R208. Residue K63 is the Proton donor of the active site.

The protein belongs to the OMP decarboxylase family. Type 1 subfamily. Homodimer.

It catalyses the reaction orotidine 5'-phosphate + H(+) = UMP + CO2. Its pathway is pyrimidine metabolism; UMP biosynthesis via de novo pathway; UMP from orotate: step 2/2. In terms of biological role, catalyzes the decarboxylation of orotidine 5'-monophosphate (OMP) to uridine 5'-monophosphate (UMP). This chain is Orotidine 5'-phosphate decarboxylase, found in Anaeromyxobacter dehalogenans (strain 2CP-1 / ATCC BAA-258).